We begin with the raw amino-acid sequence, 684 residues long: Rabphilin-3A (684 aa).

A disordered region spans residues 1–21 (MTDTVVNRWMYPGDGPLQSND). The RabBD domain maps to 40-157 (QRKQEELTDE…KRSGAWFFKG (118 aa)). The segment at 88-145 (GDGVNRCILCGEQLGMLGSACVVCEDCKKNVCTKCGVETSNNRPHPVWLCKICLEQRE) adopts an FYVE-type zinc-finger fold. Cys94, Cys97, Cys111, Cys114, Cys119, Cys122, Cys137, and Cys140 together coordinate Zn(2+). The interval 162–377 (VLPQPMPIKK…EEEEANSYDS (216 aa)) is disordered. Positions 199 to 208 (ARGDMEDRRA) are enriched in basic and acidic residues. An Omega-N-methylarginine modification is found at Arg223. Positions 243 to 252 (RDSEGWDHGH) are enriched in basic and acidic residues. Ser274 bears the Phosphoserine mark. Over residues 283 to 299 (ASMPSPAPPQPVQPGPP) the composition is skewed to pro residues. A compositionally biased stretch (low complexity) spans 301-310 (GSRAAPGPGR). Residues 382 to 504 (TLGALEFSLL…KANQRKNFNI (123 aa)) enclose the C2 1 domain. Ca(2+)-binding residues include Met412, Asp413, Asp419, Asp474, Glu475, Asp476, Glu482, Glu529, Asp571, Asp577, Asp631, Tyr632, Asp633, and Asp639. A C2 2 domain is found at 540–673 (ERGKILVSLM…NKDKKIERWH (134 aa)). Phosphoserine occurs at positions 682 and 683.

Interacts with RAB3B, RAB3C, RAB3D, RAB8A, RAB27A and RAB27B. Interacts with RAB3A; this interaction recruits RPH3A to synaptic vesicules. Interacts (via C2B domain) with SNAP25. Interacts with deubiquitinating enzyme CAND1; this interaction results in the deubiquitination of RPH3A. Interacts with GRIN2A and DLG4; this ternary complex regulates NMDA receptor composition at postsynaptic membranes. Interacts with SNCA. It depends on Ca(2+) as a cofactor. Post-translationally, ubiquitinated. Deubiquitinated by CAND1 to prevent its degradation. In terms of tissue distribution, specifically expressed in brain.

Its subcellular location is the cytoplasmic vesicle. It is found in the secretory vesicle. It localises to the synaptic vesicle membrane. The protein resides in the cell projection. The protein localises to the dendritic spine. Its subcellular location is the postsynaptic cell membrane. It is found in the membrane. Functionally, plays an essential role in docking and fusion steps of regulated exocytosis. At the presynaptic level, RPH3A is recruited by RAB3A to the synaptic vesicle membrane in a GTP-dependent manner where it modulates synaptic vesicle trafficking and calcium-triggered neurotransmitter release. In the post-synaptic compartment, forms a ternary complex with GRIN2A and DLG4 and regulates NMDA receptor stability. Also plays a role in the exocytosis of arginine vasopressin hormone. The chain is Rabphilin-3A (Rph3a) from Rattus norvegicus (Rat).